The chain runs to 367 residues: uncharacterized protein (367 aa).

This is an uncharacterized protein from Buchnera aphidicola subsp. Acyrthosiphon pisum (strain APS) (Acyrthosiphon pisum symbiotic bacterium).